The chain runs to 260 residues: Indole-3-glycerol phosphate synthase (260 aa).

The protein belongs to the TrpC family.

It catalyses the reaction 1-(2-carboxyphenylamino)-1-deoxy-D-ribulose 5-phosphate + H(+) = (1S,2R)-1-C-(indol-3-yl)glycerol 3-phosphate + CO2 + H2O. Its pathway is amino-acid biosynthesis; L-tryptophan biosynthesis; L-tryptophan from chorismate: step 4/5. The protein is Indole-3-glycerol phosphate synthase of Staphylococcus aureus (strain COL).